Reading from the N-terminus, the 182-residue chain is ATP-dependent protease subunit HslV (182 aa).

The active site involves threonine 10. Residues alanine 166, cysteine 169, and serine 172 each coordinate Na(+).

The protein belongs to the peptidase T1B family. HslV subfamily. A double ring-shaped homohexamer of HslV is capped on each side by a ring-shaped HslU homohexamer. The assembly of the HslU/HslV complex is dependent on binding of ATP.

It is found in the cytoplasm. It catalyses the reaction ATP-dependent cleavage of peptide bonds with broad specificity.. With respect to regulation, allosterically activated by HslU binding. Protease subunit of a proteasome-like degradation complex believed to be a general protein degrading machinery. This Rickettsia felis (strain ATCC VR-1525 / URRWXCal2) (Rickettsia azadi) protein is ATP-dependent protease subunit HslV.